A 135-amino-acid chain; its full sequence is Holo-[acyl-carrier-protein] synthase (135 aa).

2 residues coordinate Mg(2+): Asp7 and Glu57.

The protein belongs to the P-Pant transferase superfamily. AcpS family. Mg(2+) serves as cofactor.

The protein localises to the cytoplasm. The catalysed reaction is apo-[ACP] + CoA = holo-[ACP] + adenosine 3',5'-bisphosphate + H(+). Transfers the 4'-phosphopantetheine moiety from coenzyme A to a Ser of acyl-carrier-protein. This chain is Holo-[acyl-carrier-protein] synthase, found in Corynebacterium glutamicum (strain R).